A 536-amino-acid polypeptide reads, in one-letter code: CTP synthase (536 aa).

Residues methionine 1–leucine 267 are amidoligase domain. Residue serine 13 participates in CTP binding. UTP is bound at residue serine 13. Residues serine 14–isoleucine 19 and aspartate 71 each bind ATP. Mg(2+) is bound by residues aspartate 71 and glutamate 141. Residues aspartate 148–glutamate 150, lysine 188–glutamine 193, and lysine 224 each bind CTP. UTP is bound by residues lysine 188–glutamine 193 and lysine 224. One can recognise a Glutamine amidotransferase type-1 domain in the interval lysine 292–glutamine 534. L-glutamine is bound at residue glycine 354. The active-site Nucleophile; for glutamine hydrolysis is the cysteine 381. Residues leucine 382 to glutamine 385, glutamate 405, and arginine 462 each bind L-glutamine. Active-site residues include histidine 507 and glutamate 509.

Belongs to the CTP synthase family. In terms of assembly, homotetramer.

It carries out the reaction UTP + L-glutamine + ATP + H2O = CTP + L-glutamate + ADP + phosphate + 2 H(+). The catalysed reaction is L-glutamine + H2O = L-glutamate + NH4(+). The enzyme catalyses UTP + NH4(+) + ATP = CTP + ADP + phosphate + 2 H(+). The protein operates within pyrimidine metabolism; CTP biosynthesis via de novo pathway; CTP from UDP: step 2/2. Allosterically activated by GTP, when glutamine is the substrate; GTP has no effect on the reaction when ammonia is the substrate. The allosteric effector GTP functions by stabilizing the protein conformation that binds the tetrahedral intermediate(s) formed during glutamine hydrolysis. Inhibited by the product CTP, via allosteric rather than competitive inhibition. Its function is as follows. Catalyzes the ATP-dependent amination of UTP to CTP with either L-glutamine or ammonia as the source of nitrogen. Regulates intracellular CTP levels through interactions with the four ribonucleotide triphosphates. In Prochlorococcus marinus (strain MIT 9312), this protein is CTP synthase.